Here is a 424-residue protein sequence, read N- to C-terminus: Zinc finger and BTB domain-containing protein 6 (424 aa).

In terms of domain architecture, BTB spans 33–97; the sequence is CDVSIYINDT…CYTGALEVKR (65 aa). Serine 202 carries the post-translational modification Phosphoserine. 4 consecutive C2H2-type zinc fingers follow at residues 301-323, 326-348, 354-376, and 382-405; these read HQCP…LKMH, FLCL…IRGH, FQCT…LNIH, and YKCH…TSLH. The tract at residues 403–424 is disordered; it reads SLHGRSSGEKLPRHDLERQNLL. A compositionally biased stretch (basic and acidic residues) spans 408–424; sequence SSGEKLPRHDLERQNLL.

The protein resides in the nucleus. In terms of biological role, may be involved in transcriptional regulation. In Bos taurus (Bovine), this protein is Zinc finger and BTB domain-containing protein 6 (ZBTB6).